The primary structure comprises 146 residues: Myoglobin (146 aa).

The Globin domain occupies 2–140; that stretch reads ADLDAVLKCW…VIADLEANYK (139 aa). His59 lines the nitrite pocket. Residue His59 participates in O2 binding. His88 contacts heme b.

Belongs to the globin family. As to quaternary structure, monomeric.

It is found in the cytoplasm. The protein resides in the sarcoplasm. The catalysed reaction is Fe(III)-heme b-[protein] + nitric oxide + H2O = Fe(II)-heme b-[protein] + nitrite + 2 H(+). The enzyme catalyses H2O2 + AH2 = A + 2 H2O. In terms of biological role, monomeric heme protein which primary function is to store oxygen and facilitate its diffusion within muscle tissues. Reversibly binds oxygen through a pentacoordinated heme iron and enables its timely and efficient release as needed during periods of heightened demand. Depending on the oxidative conditions of tissues and cells, and in addition to its ability to bind oxygen, it also has a nitrite reductase activity whereby it regulates the production of bioactive nitric oxide. Under stress conditions, like hypoxia and anoxia, it also protects cells against reactive oxygen species thanks to its pseudoperoxidase activity. This is Myoglobin (mb) from Katsuwonus pelamis (Skipjack tuna).